A 101-amino-acid polypeptide reads, in one-letter code: Small ribosomal subunit protein uS14A (101 aa).

Positions Glu-29 to Val-60 are disordered. A compositionally biased stretch (polar residues) spans Pro-34–Gln-45.

Belongs to the universal ribosomal protein uS14 family. As to quaternary structure, part of the 30S ribosomal subunit. Contacts proteins S3 and S10.

In terms of biological role, binds 16S rRNA, required for the assembly of 30S particles and may also be responsible for determining the conformation of the 16S rRNA at the A site. This is Small ribosomal subunit protein uS14A from Mycolicibacterium paratuberculosis (strain ATCC BAA-968 / K-10) (Mycobacterium paratuberculosis).